Here is a 461-residue protein sequence, read N- to C-terminus: Chromosomal replication initiator protein DnaA (461 aa).

The segment at 1–83 is domain I, interacts with DnaA modulators; that stretch reads MDHSPWQRCL…LRFDVGSKPT (83 aa). The domain II stretch occupies residues 83 to 124; that stretch reads TIDNSVTNSPVSRNTGGNESLFAKATSAPKVAEPESNIPKKT. Residues 125-341 form a domain III, AAA+ region region; that stretch reads NVRLNYTFEN…GALNRVIANA (217 aa). Positions 169, 171, 172, and 173 each coordinate ATP. The segment at 342–461 is domain IV, binds dsDNA; it reads NFTGRAITID…YSNLIRTLSS (120 aa).

It belongs to the DnaA family. Oligomerizes as a right-handed, spiral filament on DNA at oriC.

The protein resides in the cytoplasm. Functionally, plays an essential role in the initiation and regulation of chromosomal replication. ATP-DnaA binds to the origin of replication (oriC) to initiate formation of the DNA replication initiation complex once per cell cycle. Binds the DnaA box (a 9 base pair repeat at the origin) and separates the double-stranded (ds)DNA. Forms a right-handed helical filament on oriC DNA; dsDNA binds to the exterior of the filament while single-stranded (ss)DNA is stabiized in the filament's interior. The ATP-DnaA-oriC complex binds and stabilizes one strand of the AT-rich DNA unwinding element (DUE), permitting loading of DNA polymerase. After initiation quickly degrades to an ADP-DnaA complex that is not apt for DNA replication. Binds acidic phospholipids. In Colwellia psychrerythraea (strain 34H / ATCC BAA-681) (Vibrio psychroerythus), this protein is Chromosomal replication initiator protein DnaA.